The primary structure comprises 256 residues: Homeobox protein ceh-34 (256 aa).

The segment at residues 134–193 (GEETNYCFKSKSRNVLRDAYKKCQYPSVEDKRRLAQQTELSIIQVSNWFKNKRQRERAAG) is a DNA-binding region (homeobox). The interval 187 to 233 (QRERAAGQLDRSSARSNDSDDGSSGCESKPPMNIDSPAPPPLPTSFD) is disordered.

The protein belongs to the SIX/Sine oculis homeobox family. As to quaternary structure, interacts (via N-terminus) with eya-1 (via C-terminus). In terms of tissue distribution, shows expression only in the pharyngeal nervous system.

The protein localises to the nucleus. Its function is as follows. Acts as a transcription regulator. Binds to the sequence motif 5'-TCAGGTT-3'. Binds to the cis-regulatory element of proapoptotic factor egl-1 gene and together with eya-1 activates egl-1 expression to promote motor neuron M4 sister cell apoptosis. Also promotes apoptosis of I1 pharyngeal neuron sister cell. Together with eya-1, required to specify the coelomocyte fate in embryonic and postembryonic precursors. Required to establish and maintain the differentiation of all 14 classes of pharyngeal neurons. Controls the neurotransmitter signaling capacity of the neurons and is required for the expression of some neurotransmitter receptors including mgl-1, glr-2 and ser-7. Affects the neuropeptidergic identity of pharyngeal neurons. Required for the pharyngeal expression of sensory receptors gur-3, glu-7 and str-97, antimicrobial defense genes such as spp-12, gpla-1/flr-2 and htrl-1, and pan-pharyngeal nervous system genes such as kin-36. Required to establish and maintain pharyngeal nervous system architecture by ensuring correct axon and synapse organization. Required for expression of eya-1 which may act as a transcriptional cofactor to specify distinct pharyngeal neuron types. Cooperates with several homeobox proteins to specify distinct pharyngeal neuron types including unc-86 in the NSM and I1 neurons, ceh-14 in the I2 neuron, ceh-2 and pros-1 in the I3 neuron, ceh-45 in the M1 neuron, ceh-2 in the M3 neuron, ceh-28 and zag-1 in the M4 neuron, and vab-15 in the M5 neuron. This Caenorhabditis elegans protein is Homeobox protein ceh-34 (ceh-34).